The following is a 450-amino-acid chain: Tubulin alpha-4 chain (450 aa).

Glutamine 11 lines the GTP pocket. Residue lysine 40 is modified to N6-acetyllysine. Positions 71, 144, 145, 179, 206, and 228 each coordinate GTP. Residue glutamate 71 participates in Mg(2+) binding. The active site involves glutamate 254. The tract at residues 431-450 (DYEEVGAESGEGDEGDEEEY) is disordered.

Belongs to the tubulin family. Dimer of alpha and beta chains. A typical microtubule is a hollow water-filled tube with an outer diameter of 25 nm and an inner diameter of 15 nM. Alpha-beta heterodimers associate head-to-tail to form protofilaments running lengthwise along the microtubule wall with the beta-tubulin subunit facing the microtubule plus end conferring a structural polarity. Microtubules usually have 13 protofilaments but different protofilament numbers can be found in some organisms and specialized cells. Mg(2+) is required as a cofactor. In terms of processing, undergoes a tyrosination/detyrosination cycle, the cyclic removal and re-addition of a C-terminal tyrosine residue by the enzymes tubulin tyrosine carboxypeptidase (TTCP) and tubulin tyrosine ligase (TTL), respectively. Acetylation of alpha chains at Lys-40 stabilizes microtubules and affects affinity and processivity of microtubule motors. This modification has a role in multiple cellular functions, ranging from cell motility, cell cycle progression or cell differentiation to intracellular trafficking and signaling.

The protein resides in the cytoplasm. It localises to the cytoskeleton. It catalyses the reaction GTP + H2O = GDP + phosphate + H(+). Tubulin is the major constituent of microtubules, a cylinder consisting of laterally associated linear protofilaments composed of alpha- and beta-tubulin heterodimers. Microtubules grow by the addition of GTP-tubulin dimers to the microtubule end, where a stabilizing cap forms. Below the cap, tubulin dimers are in GDP-bound state, owing to GTPase activity of alpha-tubulin. This is Tubulin alpha-4 chain from Gossypium hirsutum (Upland cotton).